We begin with the raw amino-acid sequence, 509 residues long: MEEIQRYLQPDRSQQHNFLYPLIFQEYIYALAHDHGLNRNRSILLENPGYNNKLSFLIVKRLITRMYQQNHFLISTNDSNKNSFLGCNKSLYSQMISEGFAFIVEIPFSLRLISSLSSFEGKKIFKSHNLRSIHSTFPFLEDNFSHLNYVLDILIPYPVHLEILVQTLRYWVKDASSLHLLRFFLHEYWNLNSLITSKKPGYSFSKKNQRFFFFLYNSYVYECESTFVFLRNQSSHLRSTSFGALLERIYFYGKIERLVEVFAKDFQVTLWLFKDPFMHYVRYQGKSILASKGTFLLMNKWKFYLVNFWQCHFYLCFHTGRIHINQLSNHSRDFMGYLSSVRLNPSMVRSQMLENSFLINNAIKKFDTLVPIIPLIGSLAKGNFCTVLGHPISKPVWSDLSDSDIIDRFGRICRNLFHYYSGSSKKKTLYRIKYILRLSCARTLARKHKSTVRTFLKRSGSELLEEFLTSEEQVLSLTFPRASSSLWGVYRSRIWYLDIFCINDLANYQ.

This sequence belongs to the intron maturase 2 family. MatK subfamily.

The protein localises to the plastid. It is found in the chloroplast. In terms of biological role, usually encoded in the trnK tRNA gene intron. Probably assists in splicing its own and other chloroplast group II introns. The polypeptide is Maturase K (Nicotiana acuminata (Acuminate tobacco)).